The sequence spans 98 residues: Protein Vpr (98 aa).

The tract at residues 1-42 (MEQLPEDQGPQREPYNEWTLEILEELKREAVRHFPRDWLHQL) is homooligomerization. Phosphoserine; by host occurs at positions 79 and 98.

The protein belongs to the HIV-1 VPR protein family. In terms of assembly, homooligomer, may form homodimer. Interacts with p6-gag region of the Pr55 Gag precursor protein through a (Leu-X-X)4 motif near the C-terminus of the P6gag protein. Interacts with host UNG. May interact with host RAD23A/HHR23A. Interacts with host VPRBP/DCAF1, leading to hijack the CUL4A-RBX1-DDB1-DCAF1/VPRBP complex, mediating ubiquitination of host proteins such as TERT and ZGPAT and arrest of the cell cycle in G2 phase. In terms of processing, phosphorylated on several residues by host. These phosphorylations regulate VPR activity for the nuclear import of the HIV-1 pre-integration complex.

The protein resides in the virion. It localises to the host nucleus. The protein localises to the host extracellular space. In terms of biological role, during virus replication, may deplete host UNG protein, and incude G2-M cell cycle arrest. Acts by targeting specific host proteins for degradation by the 26S proteasome, through association with the cellular CUL4A-DDB1 E3 ligase complex by direct interaction with host VPRPB/DCAF-1. Cell cycle arrest reportedly occurs within hours of infection and is not blocked by antiviral agents, suggesting that it is initiated by the VPR carried into the virion. Additionally, VPR induces apoptosis in a cell cycle dependent manner suggesting that these two effects are mechanistically linked. Detected in the serum and cerebrospinal fluid of AIDS patient, VPR may also induce cell death to bystander cells. During virus entry, plays a role in the transport of the viral pre-integration (PIC) complex to the host nucleus. This function is crucial for viral infection of non-dividing macrophages. May act directly at the nuclear pore complex, by binding nucleoporins phenylalanine-glycine (FG)-repeat regions. The chain is Protein Vpr from Pan troglodytes (Chimpanzee).